The primary structure comprises 404 residues: uncharacterized protein (404 aa).

A run of 8 helical transmembrane segments spans residues 1-21 (MNVL…FLFS), 32-52 (VIVG…WEAG), 89-109 (AFAL…AVLY), 182-202 (LFGY…SFMA), 261-281 (LAFV…FGLF), 285-305 (GVTL…LIGV), 344-364 (ATII…AIML), and 384-404 (KAVL…GMFI).

It belongs to the concentrative nucleoside transporter (CNT) (TC 2.A.41) family.

Its subcellular location is the cell membrane. This is an uncharacterized protein from Bacillus subtilis (strain 168).